We begin with the raw amino-acid sequence, 388 residues long: MSEQIVTPESSTPVVLNNETKINLLDLNRQQMREFFKNLGEKPFRADQVMKWMYHYCCDNFDEMTDINKVLRGKLKEVAEIRAPEVVEEQRSSDGTIKWAIAVGDQRVETVYIPEDDRATLCVSSQVGCALECKFCSTAQQGFNRNLRVSEIIGQVWRAAKIVGAAKVTGQRPITNVVMMGMGEPLLNLTNVVPAMEIMLDDFGFGLSKRRVTLSTSGVVPALDKLGDMIDVALAISLHAPNDTIRDEIVPINKKYNIETFLGAVRRYLEKSNANQGRVTIEYVMLDHVNDGTEHAHQLAELLKETPCKINLIPWNPFPGAPYGRSSNSRIDRFSKVLMSYGFTTIVRKTRGDDIDAACGQLAGDVIDRTKRTLRKRMQGEVIDIKAI.

Glu109 (proton acceptor) is an active-site residue. Residues 115–354 form the Radical SAM core domain; the sequence is EDDRATLCVS…TIVRKTRGDD (240 aa). A disulfide bridge connects residues Cys122 and Cys359. [4Fe-4S] cluster contacts are provided by Cys129, Cys133, and Cys136. S-adenosyl-L-methionine is bound by residues 183-184, Ser215, 237-239, and Asn316; these read GE and SLH. Cys359 (S-methylcysteine intermediate) is an active-site residue.

The protein belongs to the radical SAM superfamily. RlmN family. Requires [4Fe-4S] cluster as cofactor.

The protein resides in the cytoplasm. It carries out the reaction adenosine(2503) in 23S rRNA + 2 reduced [2Fe-2S]-[ferredoxin] + 2 S-adenosyl-L-methionine = 2-methyladenosine(2503) in 23S rRNA + 5'-deoxyadenosine + L-methionine + 2 oxidized [2Fe-2S]-[ferredoxin] + S-adenosyl-L-homocysteine. It catalyses the reaction adenosine(37) in tRNA + 2 reduced [2Fe-2S]-[ferredoxin] + 2 S-adenosyl-L-methionine = 2-methyladenosine(37) in tRNA + 5'-deoxyadenosine + L-methionine + 2 oxidized [2Fe-2S]-[ferredoxin] + S-adenosyl-L-homocysteine. In terms of biological role, specifically methylates position 2 of adenine 2503 in 23S rRNA and position 2 of adenine 37 in tRNAs. m2A2503 modification seems to play a crucial role in the proofreading step occurring at the peptidyl transferase center and thus would serve to optimize ribosomal fidelity. The chain is Dual-specificity RNA methyltransferase RlmN from Salmonella typhi.